Here is a 303-residue protein sequence, read N- to C-terminus: Na(+)-translocating NADH-quinone reductase subunit F (303 aa).

In terms of domain architecture, 2Fe-2S ferredoxin-type spans 1–45 (GGSCGQCRVEVHSGGGDILPTEEGHINKREAKSGCRLACQVAVKQ). Positions 4, 7, and 39 each coordinate [2Fe-2S] cluster. One can recognise an FAD-binding FR-type domain in the interval 58–198 (VQQWECEVIS…SGPFGEFFAK (141 aa)). A catalytic region spans residues 201 to 303 (DNEMVFIGGG…DHEAPEDCEY (103 aa)).

It belongs to the NqrF family. Composed of six subunits; NqrA, NqrB, NqrC, NqrD, NqrE and NqrF. [2Fe-2S] cluster is required as a cofactor. FAD serves as cofactor.

The protein resides in the cell inner membrane. It carries out the reaction a ubiquinone + n Na(+)(in) + NADH + H(+) = a ubiquinol + n Na(+)(out) + NAD(+). In terms of biological role, NQR complex catalyzes the reduction of ubiquinone-1 to ubiquinol by two successive reactions, coupled with the transport of Na(+) ions from the cytoplasm to the periplasm. The first step is catalyzed by NqrF, which accepts electrons from NADH and reduces ubiquinone-1 to ubisemiquinone by a one-electron transfer pathway. The sequence is that of Na(+)-translocating NADH-quinone reductase subunit F (nqrF) from Colwellia maris.